The chain runs to 372 residues: N-methyl-L-tryptophan oxidase (372 aa).

An FAD-binding site is contributed by 4–34; the sequence is DLIIIGSGSVGAAAGYYATRAGLKVLMTDAH. Position 307 is an S-8alpha-FAD cysteine (cysteine 307).

This sequence belongs to the MSOX/MTOX family. MTOX subfamily. Monomer. It depends on FAD as a cofactor.

The enzyme catalyses N(alpha)-methyl-L-tryptophan + O2 + H2O = L-tryptophan + formaldehyde + H2O2. Its function is as follows. Catalyzes the oxidative demethylation of N-methyl-L-tryptophan. This Salmonella heidelberg (strain SL476) protein is N-methyl-L-tryptophan oxidase.